The chain runs to 488 residues: Beta-xylosidase (488 aa).

The active-site Proton donor is Glu163. Residue Glu275 is the Nucleophile of the active site.

The protein belongs to the glycosyl hydrolase 39 family.

It catalyses the reaction Hydrolysis of (1-&gt;4)-beta-D-xylans, to remove successive D-xylose residues from the non-reducing termini.. Beta-xylosidase is an intracellular xylan-degrading enzyme. This Caldicellulosiruptor saccharolyticus (Caldocellum saccharolyticum) protein is Beta-xylosidase (xynB).